A 321-amino-acid polypeptide reads, in one-letter code: Phospho-N-acetylmuramoyl-pentapeptide-transferase (321 aa).

The next 10 membrane-spanning stretches (helical) occupy residues Met1–Ile21, Met50–Val70, Ile76–Ile96, Phe112–Val132, Ile140–Trp160, Gly176–Leu196, Ala200–Leu220, Val225–Met245, Leu250–Val270, and Val300–Val320.

The protein belongs to the glycosyltransferase 4 family. MraY subfamily. Mg(2+) serves as cofactor.

The protein resides in the cell membrane. It carries out the reaction UDP-N-acetyl-alpha-D-muramoyl-L-alanyl-gamma-D-glutamyl-L-lysyl-D-alanyl-D-alanine + di-trans,octa-cis-undecaprenyl phosphate = Mur2Ac(oyl-L-Ala-gamma-D-Glu-L-Lys-D-Ala-D-Ala)-di-trans,octa-cis-undecaprenyl diphosphate + UMP. Its pathway is cell wall biogenesis; peptidoglycan biosynthesis. Its function is as follows. Catalyzes the initial step of the lipid cycle reactions in the biosynthesis of the cell wall peptidoglycan: transfers peptidoglycan precursor phospho-MurNAc-pentapeptide from UDP-MurNAc-pentapeptide onto the lipid carrier undecaprenyl phosphate, yielding undecaprenyl-pyrophosphoryl-MurNAc-pentapeptide, known as lipid I. The protein is Phospho-N-acetylmuramoyl-pentapeptide-transferase of Staphylococcus epidermidis (strain ATCC 12228 / FDA PCI 1200).